A 323-amino-acid polypeptide reads, in one-letter code: Sphingolipid delta(4)-desaturase/C4-monooxygenase DES2 (323 aa).

Gly-2 is lipidated: N-myristoyl glycine. 2 helical membrane-spanning segments follow: residues 45–65 and 68–88; these read WAVLVLVLVQMLACWLVRGLA and WLLFWAYAFGGCVNHSLTLAI. A Histidine box-1 motif is present at residues 89–93; the sequence is HDISH. The tract at residues 95 to 99 is required for C4-hydroxylase activity; that stretch reads AAFGT. A Histidine box-2 motif is present at residues 128-132; the sequence is HVDHH. The chain crosses the membrane as a helical span at residues 210–231; it reads VYLLASSFLGLGLHPISGHFVA. A Histidine box-3 motif is present at residues 259 to 263; the sequence is HVEHH.

The protein belongs to the fatty acid desaturase type 1 family. DEGS subfamily. As to expression, highly expressed in skin, intestine and kidney.

Its subcellular location is the endoplasmic reticulum membrane. The catalysed reaction is a dihydroceramide + 2 Fe(II)-[cytochrome b5] + O2 + 2 H(+) = a phytoceramide + 2 Fe(III)-[cytochrome b5] + H2O. It carries out the reaction an N-acylsphinganine + 2 Fe(II)-[cytochrome b5] + O2 + 2 H(+) = an N-acylsphing-4-enine + 2 Fe(III)-[cytochrome b5] + 2 H2O. The enzyme catalyses N-octanoylsphinganine + 2 Fe(II)-[cytochrome b5] + O2 + 2 H(+) = N-octanoyl-4-hydroxysphinganine + 2 Fe(III)-[cytochrome b5] + H2O. It catalyses the reaction an N-acylsphinganine + 2 Fe(II)-[cytochrome b5] + O2 + 2 H(+) = an N-acyl-(4R)-4-hydroxysphinganine + 2 Fe(III)-[cytochrome b5] + H2O. It functions in the pathway membrane lipid metabolism; sphingolipid biosynthesis. Bifunctional enzyme which acts both as a sphingolipid delta(4)-desaturase and a sphingolipid C4-monooxygenase. The protein is Sphingolipid delta(4)-desaturase/C4-monooxygenase DES2 of Homo sapiens (Human).